Here is a 500-residue protein sequence, read N- to C-terminus: Lysine--tRNA ligase (500 aa).

The Mg(2+) site is built by Glu410 and Glu417.

Belongs to the class-II aminoacyl-tRNA synthetase family. As to quaternary structure, homodimer. Requires Mg(2+) as cofactor.

Its subcellular location is the cytoplasm. The catalysed reaction is tRNA(Lys) + L-lysine + ATP = L-lysyl-tRNA(Lys) + AMP + diphosphate. The protein is Lysine--tRNA ligase of Shewanella amazonensis (strain ATCC BAA-1098 / SB2B).